The primary structure comprises 147 residues: Hemoglobin subunit beta (147 aa).

Positions 3–147 (HWSCEEKQFI…VAHALALGYH (145 aa)) constitute a Globin domain. 2 residues coordinate heme b: H64 and H93.

It belongs to the globin family. Heterotetramer of two alpha-D chains and two beta chains. Red blood cells.

Its function is as follows. Involved in oxygen transport from the lung to the various peripheral tissues. The sequence is that of Hemoglobin subunit beta (HBB) from Chelonoidis carbonarius (Red-footed tortoise).